We begin with the raw amino-acid sequence, 322 residues long: Undecaprenyl-phosphate 4-deoxy-4-formamido-L-arabinose transferase (322 aa).

The Cytoplasmic segment spans residues 1–235; sequence MFEIHPVKKV…TCLTTTPLRM (235 aa). Residues 236 to 256 form a helical membrane-spanning segment; the sequence is LSLLGSIIAIGGFSIAVLLVI. Residues 257–269 lie on the Periplasmic side of the membrane; the sequence is LRLTFGPQWAAEG. Residues 270-290 traverse the membrane as a helical segment; sequence VFMLFAVLFTFIGAQFIGMGL. At 291 to 322 the chain is on the cytoplasmic side; it reads LGEYIGRIYTDVRARPRYFVQQVIRPSSKENE.

This sequence belongs to the glycosyltransferase 2 family.

It localises to the cell inner membrane. It catalyses the reaction UDP-4-deoxy-4-formamido-beta-L-arabinose + di-trans,octa-cis-undecaprenyl phosphate = 4-deoxy-4-formamido-alpha-L-arabinopyranosyl di-trans,octa-cis-undecaprenyl phosphate + UDP. It functions in the pathway glycolipid biosynthesis; 4-amino-4-deoxy-alpha-L-arabinose undecaprenyl phosphate biosynthesis; 4-amino-4-deoxy-alpha-L-arabinose undecaprenyl phosphate from UDP-4-deoxy-4-formamido-beta-L-arabinose and undecaprenyl phosphate: step 1/2. Its pathway is bacterial outer membrane biogenesis; lipopolysaccharide biosynthesis. Its function is as follows. Catalyzes the transfer of 4-deoxy-4-formamido-L-arabinose from UDP to undecaprenyl phosphate. The modified arabinose is attached to lipid A and is required for resistance to polymyxin and cationic antimicrobial peptides. This is Undecaprenyl-phosphate 4-deoxy-4-formamido-L-arabinose transferase from Shigella flexneri.